Here is a 174-residue protein sequence, read N- to C-terminus: Phospholipase A2-like protein Y52B11A.8 (174 aa).

The first 18 residues, 1–18, serve as a signal peptide directing secretion; that stretch reads MRGLLVATWIFVSVAASA. Residues Asn49 and Asn143 are each glycosylated (N-linked (GlcNAc...) asparagine). The interval 137–174 is disordered; that stretch reads YEASGPNASTTEESPAEKDDYDYESHVAGLNATPSSST.

It belongs to the phospholipase A2 family.

The protein localises to the secreted. The polypeptide is Phospholipase A2-like protein Y52B11A.8 (Caenorhabditis elegans).